The primary structure comprises 257 residues: UPF0246 protein KPK_4750 (257 aa).

The protein belongs to the UPF0246 family.

The protein is UPF0246 protein KPK_4750 of Klebsiella pneumoniae (strain 342).